We begin with the raw amino-acid sequence, 638 residues long: Golgi integral membrane protein 4 (638 aa).

Residues 1–12 (MGNGMCSRRQKR) lie on the Cytoplasmic side of the membrane. A helical; Signal-anchor for type II membrane protein membrane pass occupies residues 13–33 (IFQALACLAVAIGFVYGAMLN). The Lumenal segment spans residues 34-638 (YHLQNDLKKA…GVKNKRRAEM (605 aa)). Golgi targeting stretches follow at residues 38-107 (NDLK…RQDS) and 176-220 (YNLR…SSLR). Residues 66–216 (EHRSRLEKSL…VQLKKALNKM (151 aa)) adopt a coiled-coil conformation. The tract at residues 80 to 175 (LEHKKAKEDF…QEHSKLKESI (96 aa)) is endosome targeting. Disordered regions lie at residues 217–245 (SSLRQPEKDTVPIGRNNSPTIAPTQEHAT), 280–415 (RVKT…QQDL), and 455–638 (KQAE…RAEM). Basic and acidic residues-rich tracts occupy residues 301–316 (ATEHPVEVEEEHKKEL) and 323–332 (QVGKPERLVE). The segment covering 348-361 (EDDALEGNNEEQKE) has biased composition (acidic residues). Basic and acidic residues-rich tracts occupy residues 402-414 (QMEEARHLKEQQD), 455-467 (KQAEYENVDHDIV), and 510-521 (AESREGQEKAAA). Acidic residues-rich tracts occupy residues 534 to 553 (GEDEFEEAEQEREENLPDEN) and 577 to 593 (QQEDNIDQQYQEEEEEE). The span at 594-615 (RQIGAEREPDAQQEENKERNEE) shows a compositional bias: basic and acidic residues. Acidic residues predominate over residues 616 to 626 (NYEEEEEEEDG).

This sequence belongs to the GOLIM4 family.

It localises to the golgi apparatus. The protein resides in the golgi stack membrane. The protein localises to the endosome membrane. May play a role in endosome to Golgi protein trafficking. In Xenopus tropicalis (Western clawed frog), this protein is Golgi integral membrane protein 4 (golim4).